Here is a 1150-residue protein sequence, read N- to C-terminus: ATP-dependent DNA helicase Q-like 4B (1150 aa).

Disordered stretches follow at residues 124–143 (TPAI…GSTF) and 154–179 (CAHN…FSSS). Residues 132–142 (TSRTSSTKGST) are compositionally biased toward low complexity. Residues 327–361 (DHVEQLHQKRLLLKKQIQQLEILIHNKERKKSQCL) adopt a coiled-coil conformation. Over residues 416–428 (YDISSGSEEREQS) the composition is skewed to basic and acidic residues. Residues 416–446 (YDISSGSEEREQSVSEVIDVTDTESSNDKKW) form a disordered region. The region spanning 478–653 (INATMSGCDV…VQALGLVNCV (176 aa)) is the Helicase ATP-binding domain. 491 to 498 (MPTGGGKS) serves as a coordination point for ATP. Positions 597–600 (DEAH) match the DEAH box motif. The region spanning 678–823 (DIDKFIRENH…QMKMGYNCKA (146 aa)) is the Helicase C-terminal domain. Residues 1029 to 1111 (SNLSGILLTA…DSTINDHYKT (83 aa)) enclose the HRDC domain. The interval 1106-1150 (NDHYKTRPGSGKRRRDENVNPNVAEDDDPDWSASQSHKKVVKNKK) is disordered. Residues 1141 to 1150 (SHKKVVKNKK) are compositionally biased toward basic residues.

The protein belongs to the helicase family. RecQ subfamily. Requires Mg(2+) as cofactor. Mn(2+) is required as a cofactor. Mostly expressed in roots, seedlings, shoots, shoot apical mersitem, flowers, and siliques.

The protein localises to the nucleus. It catalyses the reaction Couples ATP hydrolysis with the unwinding of duplex DNA by translocating in the 3'-5' direction.. It carries out the reaction ATP + H2O = ADP + phosphate + H(+). Its function is as follows. 3'-5' DNA helicase that may play a role in the repair of DNA. Required to promote but not to suppress crossovers. In Arabidopsis thaliana (Mouse-ear cress), this protein is ATP-dependent DNA helicase Q-like 4B (RECQL4B).